The primary structure comprises 203 residues: Shikimate kinase (203 aa).

An ATP-binding site is contributed by 32-37; that stretch reads GAGKTA. A Mg(2+)-binding site is contributed by Thr-36. Substrate is bound by residues Asp-54, Arg-78, and Gly-100. Arg-138 serves as a coordination point for ATP. Arg-157 serves as a coordination point for substrate.

The protein belongs to the shikimate kinase family. Monomer. Requires Mg(2+) as cofactor.

The protein resides in the cytoplasm. The catalysed reaction is shikimate + ATP = 3-phosphoshikimate + ADP + H(+). Its pathway is metabolic intermediate biosynthesis; chorismate biosynthesis; chorismate from D-erythrose 4-phosphate and phosphoenolpyruvate: step 5/7. Its function is as follows. Catalyzes the specific phosphorylation of the 3-hydroxyl group of shikimic acid using ATP as a cosubstrate. This is Shikimate kinase from Mesorhizobium japonicum (strain LMG 29417 / CECT 9101 / MAFF 303099) (Mesorhizobium loti (strain MAFF 303099)).